A 104-amino-acid polypeptide reads, in one-letter code: MAAKIRRDDEVIVLTGKDKGKRGKVKNVLSSGKVIVEGINLVKKHQKPVPALNQPGGIVEKEAAIQVSNVAIFNTATGKADRVGFRFEDGKKVRFFKSNSETIK.

It belongs to the universal ribosomal protein uL24 family. In terms of assembly, part of the 50S ribosomal subunit.

Its function is as follows. One of two assembly initiator proteins, it binds directly to the 5'-end of the 23S rRNA, where it nucleates assembly of the 50S subunit. Functionally, one of the proteins that surrounds the polypeptide exit tunnel on the outside of the subunit. In Salmonella paratyphi A (strain ATCC 9150 / SARB42), this protein is Large ribosomal subunit protein uL24.